The primary structure comprises 351 residues: Photosystem II D2 protein (351 aa).

Residues 39–59 (CAYLAVGGWLTGTTFVTSWYT) form a helical membrane-spanning segment. His-116 is a chlorophyll a binding site. A helical membrane pass occupies residues 123-139 (GFCLRQFEIARLVGLRP). Residues Gln-128 and Asn-141 each coordinate pheophytin a. Residues 151 to 164 (VFVSVFLMYPLGQA) traverse the membrane as a helical segment. His-196 contributes to the chlorophyll a binding site. Residues 206 to 226 (GALLCAIHGATVQNTLFEDGD) form a helical membrane-spanning segment. Positions 213 and 260 each coordinate a plastoquinone. Fe cation is bound at residue His-213. His-267 contributes to the Fe cation binding site. The chain crosses the membrane as a helical span at residues 277 to 293 (GLWTSAFGIVGLALNLR).

The protein belongs to the reaction center PufL/M/PsbA/D family. As to quaternary structure, PSII is composed of 1 copy each of membrane proteins PsbA, PsbB, PsbC, PsbD, PsbE, PsbF, PsbH, PsbI, PsbJ, PsbK, PsbL, PsbM, PsbT, PsbX, PsbY, PsbZ, Psb30/Ycf12, at least 3 peripheral proteins of the oxygen-evolving complex and a large number of cofactors. It forms dimeric complexes. The cofactor is The D1/D2 heterodimer binds P680, chlorophylls that are the primary electron donor of PSII, and subsequent electron acceptors. It shares a non-heme iron and each subunit binds pheophytin, quinone, additional chlorophylls, carotenoids and lipids. There is also a Cl(-1) ion associated with D1 and D2, which is required for oxygen evolution. The PSII complex binds additional chlorophylls, carotenoids and specific lipids..

It localises to the plastid. It is found in the chloroplast thylakoid membrane. The enzyme catalyses 2 a plastoquinone + 4 hnu + 2 H2O = 2 a plastoquinol + O2. Functionally, photosystem II (PSII) is a light-driven water:plastoquinone oxidoreductase that uses light energy to abstract electrons from H(2)O, generating O(2) and a proton gradient subsequently used for ATP formation. It consists of a core antenna complex that captures photons, and an electron transfer chain that converts photonic excitation into a charge separation. The D1/D2 (PsbA/PsbD) reaction center heterodimer binds P680, the primary electron donor of PSII as well as several subsequent electron acceptors. D2 is needed for assembly of a stable PSII complex. The sequence is that of Photosystem II D2 protein from Pyropia yezoensis (Susabi-nori).